We begin with the raw amino-acid sequence, 148 residues long: Major microfilarial sheath protein (148 aa).

Positions 1–18 (MCCKAILSFCILSSLGNA) are cleaved as a signal peptide. Positions 19 to 43 (LYFGSHRPQYLREVGQRQYPFEPQA) are cleaved as a propeptide — removed in mature form. 5 consecutive repeats follow at residues 46-50 (MLPVP), 54-58 (MGPQP), 59-63 (MGPQP), 64-68 (MEPQP), and 71-75 (MGPQS). Residues 46-75 (MLPVPQQPMGPQPMGPQPMEPQPLPMGPQS) are repeat-rich region. Residues 52–73 (QPMGPQPMGPQPMEPQPLPMGP) are compositionally biased toward pro residues. Positions 52-80 (QPMGPQPMGPQPMEPQPLPMGPQSPQMQV) are disordered.

To B.pahangi filarial sheath protein. In terms of processing, O-glycosylated.

This Litomosoides carinii protein is Major microfilarial sheath protein (GP22).